Here is a 485-residue protein sequence, read N- to C-terminus: MSLSVSFIFLLVASIGAVVADSENVLVLTESNFEETINGNEFVLVKFYAPWCVHCKSLAPKYDEAADLLKEEGSDIKLAKVDATENQALASKFEVRGYPTILYFKSGKPTKYTGGRATAQIVDWVKKKSGPTVTTVESVEQLEELKGKTRVVVLGYFKDAKSDAATIYNEVADSVDDAFFAVAGSAEVAAAASLNEDGVALIRTDGDDSETSTIAEAEITNTIALKQWLHAYKLSAVTEFTHESAQEIVGGDLKKFHFLIIRKSDSSFDETIAKFTEVAKKFRAKIVFVLLDVDVEENARILEFLGVDAKNTPANRIVSLADQVEKFKPQEGEDFEAFTNSYLEGKSAQDLKAQDLPEDWNALPVKVLVASNFNEIALDETKTVFVKFYAPWCGHCKQLVPVWDELAEKYESNPNVVIAKLDATLNELADVKVNSFPTLKLWPAGSSTPVDYDGDRNLEKFEEFVNKYAGSASESETASQDHEEL.

The first 20 residues, M1–A20, serve as a signal peptide directing secretion. Thioredoxin domains lie at D21–G130 and Y342–G470. 2 cysteine pairs are disulfide-bonded: C52–C55 and C393–C396. Active-site nucleophile residues include C393 and C396. The short motif at H482–L485 is the Prevents secretion from ER element.

Belongs to the protein disulfide isomerase family.

The protein resides in the endoplasmic reticulum lumen. It catalyses the reaction Catalyzes the rearrangement of -S-S- bonds in proteins.. The polypeptide is Protein disulfide-isomerase 1 (pdi-1) (Caenorhabditis elegans).